The following is a 129-amino-acid chain: Lysozyme C-1 (129 aa).

The C-type lysozyme domain maps to 1 to 129 (KVFERCELAR…VSSYVEGCTL (129 aa)). 4 disulfides stabilise this stretch: cysteine 6–cysteine 127, cysteine 30–cysteine 115, cysteine 65–cysteine 81, and cysteine 77–cysteine 95. Residues glutamate 35 and aspartate 53 contribute to the active site.

Belongs to the glycosyl hydrolase 22 family. As to quaternary structure, monomer.

It catalyses the reaction Hydrolysis of (1-&gt;4)-beta-linkages between N-acetylmuramic acid and N-acetyl-D-glucosamine residues in a peptidoglycan and between N-acetyl-D-glucosamine residues in chitodextrins.. Its function is as follows. Lysozymes have primarily a bacteriolytic function; those in tissues and body fluids are associated with the monocyte-macrophage system and enhance the activity of immunoagents. The sequence is that of Lysozyme C-1 from Capra hircus (Goat).